The primary structure comprises 564 residues: Adenine deaminase (564 aa).

It belongs to the metallo-dependent hydrolases superfamily. Adenine deaminase family. The cofactor is Mn(2+).

The catalysed reaction is adenine + H2O + H(+) = hypoxanthine + NH4(+). This Deinococcus geothermalis (strain DSM 11300 / CIP 105573 / AG-3a) protein is Adenine deaminase.